Here is a 122-residue protein sequence, read N- to C-terminus: Vacuolar transporter chaperone complex subunit 1 (122 aa).

Topologically, residues 1 to 32 are cytoplasmic; the sequence is MSTQPLLQTTPGKRIALPVRVEPKVFFANERT. Residues 33–53 form a helical membrane-spanning segment; that stretch reads FLSWLSFAVVLGGLSVGLLNF. The Vacuolar segment spans residues 54 to 59; it reads GDRIGK. Residues 60–80 traverse the membrane as a helical segment; the sequence is ISAGLFTIVAIGTMGYALGIY. The Cytoplasmic segment spans residues 81–101; it reads HWRASAIRRRGSGPYDDRLGP. A helical membrane pass occupies residues 102–122; that stretch reads TILCFVLLAAIITNFVLRMLF.

It belongs to the VTC1 family. As to quaternary structure, the VTC core complex is an integral membrane heterooligomer composed of at least the catalytic subunit vtc4 and the accessory subunits vtc1 and vtc2. vtc1 is a small membrane protein without hydrophilic domain. Vtc2 and vtc4 are related and have 2 hydrophilic domains that face the cytosol, an N-terminal SPX domain and the central core domain. The central core in vtc4 is the catalytic domain. Vtc1 interacts with GTP-bound Ras-like cdc42, which is subsequently inactivated.

The protein resides in the vacuole membrane. Accessory subunit of the vacuolar transporter chaperone (VTC) complex. The VTC complex acts as a vacuolar polyphosphate polymerase that catalyzes the synthesis of inorganic polyphosphate (polyP) via transfer of phosphate from ATP to a growing polyP chain, releasing ADP. VTC exposes its catalytic domain vtc4 to the cytosol, where the growing polyP chain winds through a tunnel-shaped pocket, integrating cytoplasmic polymer synthesis with polyP membrane translocation. The VTC complex carries 9 vacuolar transmembrane domains, which are likely to constitute the translocation channel into the organelle lumen. PolyP synthesis is tightly coupled to its transport into the vacuole lumen, in order to avoid otherwise toxic intermediates in the cytosol, and it depends on the proton gradient across the membrane, formed by V-ATPase. Vtc1 contributes only 3 transmembrane domains to the complex. The VTC complex also plays a role in vacuolar membrane fusion. Involved in the control of cell polarity. This Schizosaccharomyces pombe (strain 972 / ATCC 24843) (Fission yeast) protein is Vacuolar transporter chaperone complex subunit 1.